The primary structure comprises 194 residues: MQGFFWKTWLVLAVCGTPASLAHRPLSYGEALELAVSVYNGKAGEASLYRLLEAVPQPEWDPSSEGSQQLNFTLKETACQVEEERSLEECGFQEDGVVLECTGYYFFGETPPVVVLSCVPVGGVEEEEEEEEEEQKAEAENDEEVEKEKEDEEKDQPKRVKRFKKFFKKVKKSVKKRLKKIFKKPMVIGVTFPF.

A signal peptide spans 1–22 (MQGFFWKTWLVLAVCGTPASLA). Residues 23–160 (HRPLSYGEAL…DEEKDQPKRV (138 aa)) constitute a propeptide that is removed on maturation. Cystine bridges form between Cys-79/Cys-90 and Cys-101/Cys-118. Residues 125 to 154 (EEEEEEEEEEQKAEAENDEEVEKEKEDEEK) are compositionally biased toward acidic residues. Positions 125-157 (EEEEEEEEEEQKAEAENDEEVEKEKEDEEKDQP) are disordered.

Belongs to the cathelicidin family. In terms of tissue distribution, expressed by the venom gland.

The protein resides in the secreted. Its subcellular location is the target cell membrane. Functionally, potent antimicrobial peptide against Gram-negative and Gram-positive bacteria. Adopts an amphipathic alpha helical conformation, that may allow to partition into the target membrane. Low hemolytic activities have been observed on mammalian cells. The chain is Lachesicidin from Lachesis muta rhombeata (Bushmaster).